The sequence spans 2041 residues: Fanconi anemia group M protein (2041 aa).

The segment at 1–64 (MSGGRQRTLP…PNPGPGPEAA (64 aa)) is disordered. The segment covering 48 to 60 (DPNPNVDPNPGPG) has biased composition (pro residues). The Helicase ATP-binding domain occupies 91-259 (MARAALFANT…QVVSNLLIAQ (169 aa)). 104–111 (LPTGLGKT) is a binding site for ATP. Positions 207-210 (DEAH) match the DEAH box motif. Positions 447–631 (KLEEIVIEHF…HSPRMIPEGI (185 aa)) constitute a Helicase C-terminal domain. Positions 802 to 814 (HLSTTSSAFAQKT) are enriched in polar residues. Disordered stretches follow at residues 802–822 (HLST…RDMA), 848–874 (TKTP…SEPC), 1070–1124 (KPAS…SEMK), 1158–1208 (LLRL…AWGR), 1301–1403 (STPL…ENLE), 1465–1491 (VSDV…SAAG), and 1685–1740 (DSSG…SAES). The segment covering 1170–1181 (PSAGPASQQPPS) has biased composition (low complexity). The segment covering 1319–1329 (GTAGGRTGRGS) has biased composition (gly residues). Residues 1375–1389 (VNPNSQRNSFGSSAS) are compositionally biased toward polar residues. Over residues 1685–1697 (DSSGEETNVSNEK) the composition is skewed to polar residues.

It belongs to the DEAD box helicase family. DEAH subfamily. FANCM sub-subfamily. In terms of assembly, component of the Fanconi anemia (FA) core complex. The FA core complex associates with Bloom syndrome (BLM) complex. This supercomplex between FA and BLM complexes has been called BRAFT. Phosphorylated; hyperphosphorylated in response to genotoxic stress.

It is found in the nucleus. It catalyses the reaction ATP + H2O = ADP + phosphate + H(+). Functionally, DNA-dependent ATPase component of the Fanconi anemia (FA) core complex. Required for the normal activation of the FA pathway, leading to monoubiquitination of the FANCI-FANCD2 complex in response to DNA damage, cellular resistance to DNA cross-linking drugs, and prevention of chromosomal breakage. In complex with CENPS and CENPX, binds double-stranded DNA (dsDNA), fork-structured DNA (fsDNA) and Holliday junction substrates. Its ATP-dependent DNA branch migration activity can process branched DNA structures such as a movable replication fork. This activity is strongly stimulated in the presence of CENPS and CENPX. In complex with FAAP24, efficiently binds to single-strand DNA (ssDNA), splayed-arm DNA, and 3'-flap substrates. In vitro, on its own, strongly binds ssDNA oligomers and weakly fsDNA, but does not bind to dsDNA. This chain is Fanconi anemia group M protein (FANCM), found in Gallus gallus (Chicken).